We begin with the raw amino-acid sequence, 62 residues long: Large ribosomal subunit protein uL30 (62 aa).

Belongs to the universal ribosomal protein uL30 family. In terms of assembly, part of the 50S ribosomal subunit.

In Geobacillus kaustophilus (strain HTA426), this protein is Large ribosomal subunit protein uL30.